A 132-amino-acid polypeptide reads, in one-letter code: Agouti-signaling protein (132 aa).

An N-terminal signal peptide occupies residues 1–22; the sequence is MDVTRLLLATLLVFLCFFTADS. Asn39 is a glycosylation site (N-linked (GlcNAc...) asparagine). A disordered region spans residues 62 to 85; that stretch reads ISRKEAEKKRSSKKEASMKTVARP. Positions 63 to 78 are enriched in basic and acidic residues; it reads SRKEAEKKRSSKKEAS. Cystine bridges form between Cys93/Cys108, Cys100/Cys114, Cys107/Cys125, Cys111/Cys132, and Cys116/Cys123. An Agouti domain is found at 93 to 132; it reads CVATRNSCKPPAPACCDPCASCQCRFFRSACSCRVLSLNC.

It localises to the secreted. Its function is as follows. Involved in the regulation of melanogenesis. The binding of ASP to MC1R precludes alpha-MSH initiated signaling and thus blocks production of cAMP, leading to a down-regulation of eumelanogenesis (brown/black pigment) and thus increasing synthesis of pheomelanin (yellow/red pigment). This is Agouti-signaling protein (ASIP) from Pongo pygmaeus (Bornean orangutan).